Here is a 364-residue protein sequence, read N- to C-terminus: tRNA 2-selenouridine synthase (364 aa).

A Rhodanese domain is found at 15 to 138 (FVNDTPLMDM…LRRFLIETID (124 aa)). The S-selanylcysteine intermediate role is filled by Cys-98.

This sequence belongs to the SelU family. Monomer.

The catalysed reaction is 5-methylaminomethyl-2-thiouridine(34) in tRNA + selenophosphate + (2E)-geranyl diphosphate + H2O + H(+) = 5-methylaminomethyl-2-selenouridine(34) in tRNA + (2E)-thiogeraniol + phosphate + diphosphate. It carries out the reaction 5-methylaminomethyl-2-thiouridine(34) in tRNA + (2E)-geranyl diphosphate = 5-methylaminomethyl-S-(2E)-geranyl-thiouridine(34) in tRNA + diphosphate. It catalyses the reaction 5-methylaminomethyl-S-(2E)-geranyl-thiouridine(34) in tRNA + selenophosphate + H(+) = 5-methylaminomethyl-2-(Se-phospho)selenouridine(34) in tRNA + (2E)-thiogeraniol. The enzyme catalyses 5-methylaminomethyl-2-(Se-phospho)selenouridine(34) in tRNA + H2O = 5-methylaminomethyl-2-selenouridine(34) in tRNA + phosphate. Involved in the post-transcriptional modification of the uridine at the wobble position (U34) of tRNA(Lys), tRNA(Glu) and tRNA(Gln). Catalyzes the conversion of 2-thiouridine (S2U-RNA) to 2-selenouridine (Se2U-RNA). Acts in a two-step process involving geranylation of 2-thiouridine (S2U) to S-geranyl-2-thiouridine (geS2U) and subsequent selenation of the latter derivative to 2-selenouridine (Se2U) in the tRNA chain. The polypeptide is tRNA 2-selenouridine synthase (Photobacterium profundum (strain SS9)).